The following is a 386-amino-acid chain: Succinate--CoA ligase [ADP-forming] subunit beta (386 aa).

The ATP-grasp domain maps to 9-244; that stretch reads KAVLRSYGVS…LDEEDSKEIE (236 aa). ATP-binding positions include lysine 46, 53-55, glutamate 99, cysteine 102, and glutamate 107; that span reads GRG. Mg(2+) is bound by residues asparagine 199 and aspartate 213. Residues asparagine 264 and 321 to 323 each bind substrate; that span reads GIM.

The protein belongs to the succinate/malate CoA ligase beta subunit family. Heterotetramer of two alpha and two beta subunits. It depends on Mg(2+) as a cofactor.

The enzyme catalyses succinate + ATP + CoA = succinyl-CoA + ADP + phosphate. The catalysed reaction is GTP + succinate + CoA = succinyl-CoA + GDP + phosphate. It functions in the pathway carbohydrate metabolism; tricarboxylic acid cycle; succinate from succinyl-CoA (ligase route): step 1/1. Functionally, succinyl-CoA synthetase functions in the citric acid cycle (TCA), coupling the hydrolysis of succinyl-CoA to the synthesis of either ATP or GTP and thus represents the only step of substrate-level phosphorylation in the TCA. The beta subunit provides nucleotide specificity of the enzyme and binds the substrate succinate, while the binding sites for coenzyme A and phosphate are found in the alpha subunit. The sequence is that of Succinate--CoA ligase [ADP-forming] subunit beta from Bacillus cereus (strain B4264).